We begin with the raw amino-acid sequence, 262 residues long: MTILNEIIEYKKTLLERKYYDKKLEILQDNGNVKRRKLIDSLNYDRTLSVIAEIKSKSPSVPQLPQRDLVQQVKDYQKYGANAISILTDEKYFGGSFERLNQLSKITSLPVLCKDFIIDKIQIDVAKRAGASIILLIVNILSDDQLKELYSYATNHNLEALVEVHTIRELERAHQINPKIIGVNNRDLKRFETDVLHTNKLLKFKKSNCCYISESGIHTKEDVEKIVDSSIDGLLVGEALMKTNDLSQFLPSLKLKKNLYDS.

The protein belongs to the TrpC family.

It carries out the reaction 1-(2-carboxyphenylamino)-1-deoxy-D-ribulose 5-phosphate + H(+) = (1S,2R)-1-C-(indol-3-yl)glycerol 3-phosphate + CO2 + H2O. It functions in the pathway amino-acid biosynthesis; L-tryptophan biosynthesis; L-tryptophan from chorismate: step 4/5. This Staphylococcus epidermidis (strain ATCC 35984 / DSM 28319 / BCRC 17069 / CCUG 31568 / BM 3577 / RP62A) protein is Indole-3-glycerol phosphate synthase.